We begin with the raw amino-acid sequence, 666 residues long: MSDTVSLTFPDGSVRSFAAGATGRDVAESISKSLAKKAVAIALDGVVRDLADPVVDGKIEIVTRADPRALELIRHDTAHVLAEAVQEMWPGTQVTIGPVIENGFYYDFAKNEPFTPEDLPKIEKKMKEIIQRNQPFRKEVWSREKAREVFAAKGESYKVELIDAIPEDQDIKIYYQGDWFDPCRGPHMASTGQIGTAFKLMKVAGAYWRGDSNNPMLTRIYGTAFAEQEQLDNYLHILAEAEKRDHRKLGREMDLFHFQEEGPGVVFWHGKGWKMFQSLTAYMRRRLANTYQEVNAPQVLDKSLWETSGHWGWYQENMFAVKSAHAFTNPNDPEADQRVFALKPMNCPGHVQIFKHGLKSYRELPVRLAEFGLVHRYEASGALHGLMRVRGFTQDDAHVFCTEEQMAAECLRINDLILSVYEDFGFKEVVVKLSTRPEKRVGSDELWDRAESVMTEVLKAIEEQSGGRIKTGILPGEGAFYGPKFEYTLKDAIGREWQCGTTQVDFNLPERFGAFYIDQHSEKTQPVMIHRAICGSMERFLGILIENFAGHMPLWFAPLQVVVATITSEADDYGRDVAEQLRDAGLEVETDFRNEKINYKVREHSVGKVPVIMVCGKREAEERTVNIRRLGSQDQVSMTLDEAIASLVDEATPPDVKRKRAARKPA.

In terms of domain architecture, TGS spans 1 to 64 (MSDTVSLTFP…VDGKIEIVTR (64 aa)). The catalytic stretch occupies residues 245-553 (DHRKLGREMD…LIENFAGHMP (309 aa)). 3 residues coordinate Zn(2+): Cys347, His398, and His530.

This sequence belongs to the class-II aminoacyl-tRNA synthetase family. Homodimer. Zn(2+) serves as cofactor.

It localises to the cytoplasm. The enzyme catalyses tRNA(Thr) + L-threonine + ATP = L-threonyl-tRNA(Thr) + AMP + diphosphate + H(+). Functionally, catalyzes the attachment of threonine to tRNA(Thr) in a two-step reaction: L-threonine is first activated by ATP to form Thr-AMP and then transferred to the acceptor end of tRNA(Thr). Also edits incorrectly charged L-seryl-tRNA(Thr). The chain is Threonine--tRNA ligase from Allorhizobium ampelinum (strain ATCC BAA-846 / DSM 112012 / S4) (Agrobacterium vitis (strain S4)).